A 236-amino-acid polypeptide reads, in one-letter code: MTENNEKDIQVTEAVAAPATETAAPATTDDRRGGARRGERGDRGQGRGDRGGRGGRDGGREAEKSQFVERVVTINRVSKVVKGGRRFSFTALVVVGDGNGMVGVGYGKAKEVPAAIAKGVEEAKKSFFRVPRIGSTIPHRVQGEAAAGVVMLRPASAGTGVIAGGPVRAVLECVGIHDILSKSLGSSNAINIVHATVDALKRLEEPAAVAARRGLPLDEIAPAAMVKALMNQKAGV.

A compositionally biased stretch (basic and acidic residues) spans 1–10 (MTENNEKDIQ). The disordered stretch occupies residues 1 to 64 (MTENNEKDIQ…GRDGGREAEK (64 aa)). Residues 11–27 (VTEAVAAPATETAAPAT) are compositionally biased toward low complexity. A compositionally biased stretch (basic and acidic residues) spans 28 to 64 (TDDRRGGARRGERGDRGQGRGDRGGRGGRDGGREAEK). The 64-residue stretch at 67-130 (FVERVVTINR…EEAKKSFFRV (64 aa)) folds into the S5 DRBM domain.

The protein belongs to the universal ribosomal protein uS5 family. As to quaternary structure, part of the 30S ribosomal subunit. Contacts proteins S4 and S8.

Its function is as follows. With S4 and S12 plays an important role in translational accuracy. Functionally, located at the back of the 30S subunit body where it stabilizes the conformation of the head with respect to the body. The sequence is that of Small ribosomal subunit protein uS5 from Arthrobacter sp. (strain FB24).